Here is a 265-residue protein sequence, read N- to C-terminus: Glutamate racemase (265 aa).

Substrate contacts are provided by residues 10–11 and 42–43; these read DS and YG. The active-site Proton donor/acceptor is the C73. 74–75 contacts substrate; it reads NT. The Proton donor/acceptor role is filled by C180. A substrate-binding site is contributed by 181-182; that stretch reads TH.

The protein belongs to the aspartate/glutamate racemases family.

The enzyme catalyses L-glutamate = D-glutamate. The protein operates within cell wall biogenesis; peptidoglycan biosynthesis. In terms of biological role, provides the (R)-glutamate required for cell wall biosynthesis. The sequence is that of Glutamate racemase from Synechococcus sp. (strain CC9605).